The following is a 210-amino-acid chain: Ovomucoid (210 aa).

The N-terminal stretch at 1 to 24 (MAMAGVFVLFSFVLCGFLPDAAFG) is a signal peptide. 3 Kazal-like domains span residues 25-88 (AEVD…ECKE), 89-153 (TVPM…GCRK), and 156-210 (AAVS…FGKC). Intrachain disulfides connect C29–C68, C46–C65, and C54–C86. N34 carries N-linked (GlcNAc...) asparagine glycosylation. N-linked (GlcNAc...) asparagine glycans are attached at residues N77, N93, and N99. 6 cysteine pairs are disulfide-bonded: C94–C133, C111–C130, C119–C151, C162–C192, C170–C189, and C178–C210. A glycan (N-linked (GlcNAc...) asparagine; partial) is linked at N199.

The protein localises to the secreted. Serine protease inhibitor. Inhibits trypsin. The sequence is that of Ovomucoid from Gallus gallus (Chicken).